The sequence spans 705 residues: Polyribonucleotide nucleotidyltransferase (705 aa).

Mg(2+) contacts are provided by Asp-486 and Asp-492. Positions 553–612 (PRIYTMKINPEKIKDVIGKGGSVIRALTDETGTTIEIEDDGTIKIAATDGDKAKHAIRRI) constitute a KH domain. The S1 motif domain maps to 622 to 690 (GRIYAGKVTR…RQGRIRLSIK (69 aa)).

Belongs to the polyribonucleotide nucleotidyltransferase family. In terms of assembly, component of the RNA degradosome, which is a multiprotein complex involved in RNA processing and mRNA degradation. Mg(2+) is required as a cofactor.

It localises to the cytoplasm. The enzyme catalyses RNA(n+1) + phosphate = RNA(n) + a ribonucleoside 5'-diphosphate. Its function is as follows. Involved in mRNA degradation. Catalyzes the phosphorolysis of single-stranded polyribonucleotides processively in the 3'- to 5'-direction. The protein is Polyribonucleotide nucleotidyltransferase of Yersinia pestis bv. Antiqua (strain Nepal516).